The chain runs to 563 residues: Arginine--tRNA ligase (563 aa).

A 'HIGH' region motif is present at residues 121–131; it reads PNIAKPFSIGH.

Belongs to the class-I aminoacyl-tRNA synthetase family. Monomer.

It localises to the cytoplasm. The catalysed reaction is tRNA(Arg) + L-arginine + ATP = L-arginyl-tRNA(Arg) + AMP + diphosphate. This is Arginine--tRNA ligase from Streptococcus pneumoniae (strain Hungary19A-6).